Consider the following 774-residue polypeptide: DNA ligase (774 aa).

Residues 36 to 40 (DAVYD), 85 to 86 (SL), and E161 contribute to the NAD(+) site. K163 (N6-AMP-lysine intermediate) is an active-site residue. Residues R184, E221, K341, and K365 each contribute to the NAD(+) site. 4 residues coordinate Zn(2+): C459, C462, C477, and C482. The 82-residue stretch at 693-774 (VQSGLLRGKT…LLEALAVTGI (82 aa)) folds into the BRCT domain.

It belongs to the NAD-dependent DNA ligase family. LigA subfamily. It depends on Mg(2+) as a cofactor. The cofactor is Mn(2+).

The catalysed reaction is NAD(+) + (deoxyribonucleotide)n-3'-hydroxyl + 5'-phospho-(deoxyribonucleotide)m = (deoxyribonucleotide)n+m + AMP + beta-nicotinamide D-nucleotide.. In terms of biological role, DNA ligase that catalyzes the formation of phosphodiester linkages between 5'-phosphoryl and 3'-hydroxyl groups in double-stranded DNA using NAD as a coenzyme and as the energy source for the reaction. It is essential for DNA replication and repair of damaged DNA. The polypeptide is DNA ligase (Trichodesmium erythraeum (strain IMS101)).